The following is a 208-amino-acid chain: Thymidylate kinase (208 aa).

11–18 (GIEGAGKT) is a binding site for ATP.

This sequence belongs to the thymidylate kinase family.

The catalysed reaction is dTMP + ATP = dTDP + ADP. Its function is as follows. Phosphorylation of dTMP to form dTDP in both de novo and salvage pathways of dTTP synthesis. In Hahella chejuensis (strain KCTC 2396), this protein is Thymidylate kinase.